Consider the following 352-residue polypeptide: MPRKKVLVVDDSAFMRKMIGDMINSDDELEIVGKAGNGQEALEKIRELQPDVVVMDIEMPVLDGLSTLSRIMESQALPVIIFSSLSQKGTEQTLKALQLGAVDFIAKPSGQISLDVLSVKEELIKKLKVAANTSRKLPVYQSLHEPVVKAKKSLPDQDRKLNKLVVIAASTGGPKALHQVIPRFPAGIDAAILVVQHMPPGFTRSLAERLDSLSELRVKEAEHGEKVLPACVYIAPGDYHLKAKSRLKGTENELYIELDQSKPRGGLRPAADIMLKSVAKQFWSHIVCVIMTGMGNDGAAALPCIKEKKGRIIAEHQSTCVVYGMPKAAVETGLVDKIVPLSEITEEVLSML.

Residues 5–122 (KVLVVDDSAF…SLDVLSVKEE (118 aa)) enclose the Response regulatory domain. Asp56 is subject to 4-aspartylphosphate. The CheB-type methylesterase domain maps to 155 to 352 (PDQDRKLNKL…EITEEVLSML (198 aa)). Catalysis depends on residues Ser170, His197, and Asp297.

This sequence belongs to the CheB family. Phosphorylated by CheA. Phosphorylation of the N-terminal regulatory domain activates the methylesterase activity.

The protein resides in the cytoplasm. The catalysed reaction is [protein]-L-glutamate 5-O-methyl ester + H2O = L-glutamyl-[protein] + methanol + H(+). It carries out the reaction L-glutaminyl-[protein] + H2O = L-glutamyl-[protein] + NH4(+). In terms of biological role, involved in chemotaxis. Part of a chemotaxis signal transduction system that modulates chemotaxis in response to various stimuli. Catalyzes the demethylation of specific methylglutamate residues introduced into the chemoreceptors (methyl-accepting chemotaxis proteins or MCP) by CheR. Also mediates the irreversible deamidation of specific glutamine residues to glutamic acid. The protein is Protein-glutamate methylesterase/protein-glutamine glutaminase 1 of Syntrophomonas wolfei subsp. wolfei (strain DSM 2245B / Goettingen).